The sequence spans 467 residues: Ribulose bisphosphate carboxylase large chain (467 aa).

Lys5 is modified (N6,N6,N6-trimethyllysine). Residues Asn114 and Thr164 each contribute to the substrate site. Residue Lys166 is the Proton acceptor of the active site. Residue Lys168 participates in substrate binding. Mg(2+) contacts are provided by Lys192, Asp194, and Glu195. Lys192 is subject to N6-carboxylysine. Residue His285 is the Proton acceptor of the active site. Arg286, His318, and Ser370 together coordinate substrate.

This sequence belongs to the RuBisCO large chain family. Type I subfamily. As to quaternary structure, heterohexadecamer of 8 large chains and 8 small chains; disulfide-linked. The disulfide link is formed within the large subunit homodimers. Requires Mg(2+) as cofactor. In terms of processing, the disulfide bond which can form in the large chain dimeric partners within the hexadecamer appears to be associated with oxidative stress and protein turnover.

The protein localises to the plastid. It localises to the chloroplast. The catalysed reaction is 2 (2R)-3-phosphoglycerate + 2 H(+) = D-ribulose 1,5-bisphosphate + CO2 + H2O. It catalyses the reaction D-ribulose 1,5-bisphosphate + O2 = 2-phosphoglycolate + (2R)-3-phosphoglycerate + 2 H(+). RuBisCO catalyzes two reactions: the carboxylation of D-ribulose 1,5-bisphosphate, the primary event in carbon dioxide fixation, as well as the oxidative fragmentation of the pentose substrate in the photorespiration process. Both reactions occur simultaneously and in competition at the same active site. The sequence is that of Ribulose bisphosphate carboxylase large chain from Hydrophyllum virginianum (Eastern waterleaf).